The chain runs to 215 residues: Adenylate kinase (215 aa).

10 to 15 lines the ATP pocket; sequence GAGKGT. Residues 30–59 form an NMP region; sequence STGDMFRAAIKDQTPLGQEAKSYMDKGELV. AMP is bound by residues T31, R36, 57-59, 85-88, and Q92; these read ELV and GFPR. Residues 126-163 are LID; the sequence is GRRICPTCGATYHVIYNPPKVEGVCDIDGSALVQREDD. R127 provides a ligand contact to ATP. Residues C130 and C133 each contribute to the Zn(2+) site. 136-137 is a binding site for ATP; that stretch reads TY. The Zn(2+) site is built by C150 and D153. AMP-binding residues include R160 and R171. R199 is a binding site for ATP.

The protein belongs to the adenylate kinase family. Monomer.

Its subcellular location is the cytoplasm. The catalysed reaction is AMP + ATP = 2 ADP. The protein operates within purine metabolism; AMP biosynthesis via salvage pathway; AMP from ADP: step 1/1. In terms of biological role, catalyzes the reversible transfer of the terminal phosphate group between ATP and AMP. Plays an important role in cellular energy homeostasis and in adenine nucleotide metabolism. In Exiguobacterium sibiricum (strain DSM 17290 / CCUG 55495 / CIP 109462 / JCM 13490 / 255-15), this protein is Adenylate kinase.